The primary structure comprises 169 residues: Aspartic protease inhibitor 3 (169 aa).

N-linked (GlcNAc...) asparagine glycosylation occurs at Asn-1. Intrachain disulfides connect Cys-30–Cys-75 and Cys-124–Cys-134.

Belongs to the protease inhibitor I3 (leguminous Kunitz-type inhibitor) family.

It localises to the vacuole. Functionally, inhibitor of cathepsin D (aspartic protease). May also inhibit trypsin and chymotrypsin (serine proteases). Protects the plant by inhibiting proteases of invading organisms. The polypeptide is Aspartic protease inhibitor 3 (Solanum tuberosum (Potato)).